The following is a 298-amino-acid chain: Tritrans,polycis-undecaprenyl-diphosphate synthase (geranylgeranyl-diphosphate specific) (298 aa).

Asp-35 is a catalytic residue. Asp-35 provides a ligand contact to Mg(2+). Substrate contacts are provided by residues 36–39 (GNRR), Arg-48, His-52, and 80–82 (STE). The active-site Proton acceptor is Asn-83. Substrate contacts are provided by residues Phe-84, Arg-86, Arg-208, and 214–216 (RIS).

It belongs to the UPP synthase family. Homodimer. Requires Mg(2+) as cofactor.

The enzyme catalyses geranylgeranyl diphosphate + 7 isopentenyl diphosphate = tri-trans,hepta-cis-undecaprenyl diphosphate + 7 diphosphate. Functionally, catalyzes the sequential condensation of isopentenyl diphosphate (IPP) with geranylgeranyl diphosphate (GGPP) to yield (2Z,6Z,10Z,14Z,18Z,22Z,26Z,30E,34E,38E)-undecaprenyl diphosphate (tritrans,heptacis-UPP). It is probably the precursor of glycosyl carrier lipids. In Methanosarcina mazei (strain ATCC BAA-159 / DSM 3647 / Goe1 / Go1 / JCM 11833 / OCM 88) (Methanosarcina frisia), this protein is Tritrans,polycis-undecaprenyl-diphosphate synthase (geranylgeranyl-diphosphate specific).